Here is a 399-residue protein sequence, read N- to C-terminus: Elongation factor Tu (399 aa).

The region spanning 10-204 (KPHVNIGTIG…AVDASIPEPE (195 aa)) is the tr-type G domain. Residues 19–26 (GHVDHGKT) are G1. Residue 19–26 (GHVDHGKT) participates in GTP binding. A Mg(2+)-binding site is contributed by threonine 26. Positions 60–64 (GITIN) are G2. The segment at 81–84 (DCPG) is G3. GTP is bound by residues 81 to 85 (DCPGH) and 136 to 139 (NKCD). Positions 136–139 (NKCD) are G4. Positions 174-176 (SGL) are G5.

Belongs to the TRAFAC class translation factor GTPase superfamily. Classic translation factor GTPase family. EF-Tu/EF-1A subfamily. As to quaternary structure, monomer.

It localises to the cytoplasm. It carries out the reaction GTP + H2O = GDP + phosphate + H(+). In terms of biological role, GTP hydrolase that promotes the GTP-dependent binding of aminoacyl-tRNA to the A-site of ribosomes during protein biosynthesis. This chain is Elongation factor Tu, found in Prochlorococcus marinus (strain MIT 9515).